A 388-amino-acid polypeptide reads, in one-letter code: Trans-enoyl reductase tenC (388 aa).

51 to 54 (VDGK) contacts NADP(+). 142–149 (VGIASVGM) serves as a coordination point for substrate. NADP(+)-binding positions include 219-222 (SSES), tyrosine 237, and 284-285 (LD). 304–308 (SFTQF) provides a ligand contact to substrate. 373-374 (IK) serves as a coordination point for NADP(+).

It belongs to the zinc-containing alcohol dehydrogenase family. As to quaternary structure, monomer.

It functions in the pathway secondary metabolite biosynthesis. Its function is as follows. Trans-enoyl reductase; part of the gene cluster that mediates the biosynthesis of tenellin-type 2-pyridones, iron-chelating compounds involved in iron stress tolerance, competition with the natural competitor fungus Metarhizium robertsii and insect hosts infection. TenC collaborates with the hybrid PKS-NRPS synthetase tenS to catalyze the assembly of the polyketide-amino acid backbone, since tenS lacks a designated enoylreductase (ER) domain. Upon formation of the polyketide backbone on the thiotemplate of tenS, the triketide is transferred to the NRPS module and linked to tyrosine to produce the pyrrolidine-2-dione intermediates, including pretellinin A, 11-hydropretellenin A, 12-hydropretellenin A, 13-hydropretellenin A, 14-hydropretellenin A, 12-oxopretellenin A and prototellinin D. The pathway begins with the assembly of the polyketide-amino acid backbone by the hybrid PKS-NRPS tenS with the help of the enoyl reductase tenC. These enzymes catalyze the synthesis of the pyrrolidine-2-dione intermediates pretellinin A, 11-hydropretellenin A, 12-hydropretellenin A, 13-hydropretellenin A, 14-hydropretellenin A, 12-oxopretellenin A and prototellinin D. The cytochrome P450 monooxygenase tenA then catalyzes an oxidative ring expansion of pretenellin A and 14-hydropretellenin A to form the 2-pyridone core, leading to pretenellin B and pyridovericin, respectively. The cytochrome P450 monooxygenase tenB is then required for the selective N-hydroxylation of the 2-pyridone nitrogen of yield tellinin and 15-hydroxytellenin (15-HT), respectively. The UDP-glucosyltransferase GT1 and the methyltransferase MT1, located outside the tenS gene cluster, contribute to the stepwise glycosylation and methylation of 15-HT to obtain the glycoside pyridovericin-N-O-(4-O-methyl-beta-D-glucopyranoside) (PMGP). Additional related compounds such as 1-O-methyl-15-HT, (8Z)-1-O-methyl-15-HT, and O-methyltenellin A are also produced but the enzymes involved in their biosynthesis have still to be determined. In Beauveria bassiana (strain ARSEF 2860) (White muscardine disease fungus), this protein is Trans-enoyl reductase tenC.